The sequence spans 431 residues: MNKLENPLQNDVAGPAPRHRTTQVMVGDIAVGGGAPIVVQSMTNTDTADIDGTIKQVAALARAGSEMVRITVDREEAAAAVPHIRDGLRKLGLTTPLIGDFHYIGHKLLAEYPACAEALDKYRINPGNVGFKAKRDTQFADIVEIAIKNNKAVRIGANWGSLDQELLTKLMDENAASAQPRDVRAVTREAMVQSALLSAARAEEIGLPKTKMVLSAKVSAVQDLIAVYQDLASRSDYAIHLGLTEAGMGSKGIVASSAALGILLQQGIGDTIRISLTPEPGGDRTLEVQVAQELLQTMGFRTFVPLVAACPGCGRTTSTTFQELARSIQDFIRVEMPSWKTRYPGVENLNVAVMGCIVNGPGESKHANIGISLPGTGESPAAPVFVDGEKFRTLRGENIAGDFKALVIDYIEQRYGAAPKPGAAQMVPAAE.

Residues C310, C313, C356, and E363 each contribute to the [4Fe-4S] cluster site.

This sequence belongs to the IspG family. [4Fe-4S] cluster is required as a cofactor.

It catalyses the reaction (2E)-4-hydroxy-3-methylbut-2-enyl diphosphate + oxidized [flavodoxin] + H2O + 2 H(+) = 2-C-methyl-D-erythritol 2,4-cyclic diphosphate + reduced [flavodoxin]. It participates in isoprenoid biosynthesis; isopentenyl diphosphate biosynthesis via DXP pathway; isopentenyl diphosphate from 1-deoxy-D-xylulose 5-phosphate: step 5/6. Converts 2C-methyl-D-erythritol 2,4-cyclodiphosphate (ME-2,4cPP) into 1-hydroxy-2-methyl-2-(E)-butenyl 4-diphosphate. The protein is 4-hydroxy-3-methylbut-2-en-1-yl diphosphate synthase (flavodoxin) of Rhodopseudomonas palustris (strain HaA2).